A 172-amino-acid polypeptide reads, in one-letter code: Agamous-like MADS-box protein AGL29 (172 aa).

The 61-residue stretch at 1–61 (MGRRKIKMEM…GKPFSYGKPN (61 aa)) folds into the MADS-box domain. The stretch at 86 to 123 (NYRPKLKRLSERLDLLNQEVEAEKERGEKSQEKLESAG) forms a coiled coil. The disordered stretch occupies residues 106-125 (EAEKERGEKSQEKLESAGDE).

As to expression, expressed in pollen.

The protein localises to the nucleus. Its function is as follows. Probable transcription factor. This is Agamous-like MADS-box protein AGL29 from Arabidopsis thaliana (Mouse-ear cress).